The sequence spans 448 residues: Signal recognition particle protein (448 aa).

Residues 101-108 (GLQGSGKT), 182-186 (DSAGR), and 240-243 (SKFD) each bind GTP.

The protein belongs to the GTP-binding SRP family. SRP54 subfamily. Part of the signal recognition particle protein translocation system, which is composed of SRP and FtsY. SRP is a ribonucleoprotein composed of Ffh and a 4.5S RNA molecule.

Its subcellular location is the cytoplasm. The enzyme catalyses GTP + H2O = GDP + phosphate + H(+). Its function is as follows. Involved in targeting and insertion of nascent membrane proteins into the cytoplasmic membrane. Binds to the hydrophobic signal sequence of the ribosome-nascent chain (RNC) as it emerges from the ribosomes. The SRP-RNC complex is then targeted to the cytoplasmic membrane where it interacts with the SRP receptor FtsY. Interaction with FtsY leads to the transfer of the RNC complex to the Sec translocase for insertion into the membrane, the hydrolysis of GTP by both Ffh and FtsY, and the dissociation of the SRP-FtsY complex into the individual components. This chain is Signal recognition particle protein, found in Helicobacter pylori (strain ATCC 700392 / 26695) (Campylobacter pylori).